A 702-amino-acid chain; its full sequence is Nucleolar and coiled-body phosphoprotein 1 (702 aa).

The 33-residue stretch at valine 10 to glutamine 42 folds into the LisH domain. Lysine 33 is subject to N6-acetyllysine. The tract at residues proline 65–glutamate 635 is disordered. Residues lysine 68 and lysine 77 each participate in a glycyl lysine isopeptide (Lys-Gly) (interchain with G-Cter in SUMO2) cross-link. 2 Acidic serine cluster repeats span residues serine 85 to glutamate 96 and glutamate 130 to glutamate 141. Residues serine 85–glutamate 566 are 11 X 12 AA approximate repeats of an acidic serine cluster. Serine 88 is modified (phosphoserine). Serine 89 and serine 92 each carry diphosphoserine. Serine 89 and serine 92 each carry phosphoserine; by CK2. Serine 93 carries the post-translational modification Phosphoserine. 2 stretches are compositionally biased toward low complexity: residues lysine 123–glutamate 135 and glutamine 151–proline 164. Residues serine 172–threonine 188 are compositionally biased toward acidic residues. An Acidic serine cluster 3 repeat occupies serine 176 to glutamate 187. 4 stretches are compositionally biased toward low complexity: residues proline 189 to lysine 205, lysine 224 to serine 235, alanine 245 to aspartate 278, and leucine 308 to aspartate 329. Glycyl lysine isopeptide (Lys-Gly) (interchain with G-Cter in SUMO2) cross-links involve residues lysine 195 and lysine 201. The tract at residues lysine 215–serine 390 is interaction with RPA194. 2 Acidic serine cluster repeats span residues serine 232–glutamate 241 and serine 273–glutamate 284. The segment covering serine 330–serine 342 has biased composition (acidic residues). The Acidic serine cluster 6 repeat unit spans residues serine 334 to glutamate 345. Residues lysine 351 and lysine 356 each participate in a glycyl lysine isopeptide (Lys-Gly) (interchain with G-Cter in SUMO2) cross-link. Residues valine 353–alanine 362 show a composition bias toward low complexity. 3 positions are modified to phosphoserine: serine 371, serine 372, and serine 375. The stretch at serine 372 to glutamate 383 is one Acidic serine cluster 7 repeat. Glycyl lysine isopeptide (Lys-Gly) (interchain with G-Cter in SUMO2) cross-links involve residues lysine 396, lysine 402, lysine 407, and lysine 413. The segment covering threonine 411–proline 422 has biased composition (polar residues). Lysine 421 bears the N6-acetyllysine; alternate mark. Lysine 421 participates in a covalent cross-link: Glycyl lysine isopeptide (Lys-Gly) (interchain with G-Cter in SUMO1); alternate. Lysine 421 participates in a covalent cross-link: Glycyl lysine isopeptide (Lys-Gly) (interchain with G-Cter in SUMO2); alternate. Residues serine 431 to glutamate 442 form an Acidic serine cluster 8 repeat. Over residues serine 431 to glutamate 443 the composition is skewed to acidic residues. Residues lysine 447 and lysine 459 each participate in a glycyl lysine isopeptide (Lys-Gly) (interchain with G-Cter in SUMO2) cross-link. Low complexity-rich tracts occupy residues lysine 447 to serine 480 and lysine 514 to glutamate 525. Acidic serine cluster repeat units lie at residues serine 474 to glutamate 484 and serine 521 to glutamate 531. Polar residues predominate over residues proline 541–serine 554. The Acidic serine cluster 11 repeat unit spans residues leucine 555 to glutamate 566. Phosphoserine is present on serine 563. A compositionally biased stretch (acidic residues) spans serine 563–threonine 572. Lysine 575 participates in a covalent cross-link: Glycyl lysine isopeptide (Lys-Gly) (interchain with G-Cter in SUMO1). Lysine 582 participates in a covalent cross-link: Glycyl lysine isopeptide (Lys-Gly) (interchain with G-Cter in SUMO2). Serine 585 carries the phosphoserine modification. Position 594 is a phosphothreonine (threonine 594). A Glycyl lysine isopeptide (Lys-Gly) (interchain with G-Cter in SUMO2) cross-link involves residue lysine 607. Threonine 610 and threonine 613 each carry phosphothreonine. Lysine 616 participates in a covalent cross-link: Glycyl lysine isopeptide (Lys-Gly) (interchain with G-Cter in SUMO2). Phosphoserine occurs at positions 625 and 646. Lysine 650 is covalently cross-linked (Glycyl lysine isopeptide (Lys-Gly) (interchain with G-Cter in SUMO2)). Residue lysine 666 is modified to N6-acetyllysine; alternate. A Glycyl lysine isopeptide (Lys-Gly) (interchain with G-Cter in SUMO2); alternate cross-link involves residue lysine 666. Arginine 686 is subject to Omega-N-methylarginine. The residue at position 689 (serine 689) is a Phosphoserine. Residue lysine 698 forms a Glycyl lysine isopeptide (Lys-Gly) (interchain with G-Cter in SUMO2) linkage. A Phosphoserine modification is found at serine 701.

The protein belongs to the NOLC1 family. In terms of assembly, interacts with RNA polymerase I 194 kDa subunit (RPA194) and with casein kinase-II. Interacts with DKC1/NAP57, NOP58 and fibrillarin. Undergoes rapid and massive phosphorylation/dephosphorylation cycles on CK2 and PKC sites. NOLC1 is one of the mostly phosphorylated proteins in the cell. In terms of processing, pyrophosphorylated by 5-diphosphoinositol pentakisphosphate (5-IP7). Serine pyrophosphorylation is achieved by Mg(2+)-dependent, but enzyme independent transfer of a beta-phosphate from a inositol pyrophosphate to a pre-phosphorylated serine residue. Post-translationally, ubiquitinated. Monoubiquitination by the BCR(KBTBD8) complex promotes the formation of a NOLC1-TCOF1 complex that acts as a platform to connect RNA polymerase I with enzymes responsible for ribosomal processing and modification, leading to remodel the translational program of differentiating cells in favor of neural crest specification.

The protein resides in the nucleus. The protein localises to the nucleolus. It is found in the cytoplasm. In terms of biological role, nucleolar protein that acts as a regulator of RNA polymerase I by connecting RNA polymerase I with enzymes responsible for ribosomal processing and modification. Required for neural crest specification: following monoubiquitination by the BCR(KBTBD8) complex, associates with TCOF1 and acts as a platform to connect RNA polymerase I with enzymes responsible for ribosomal processing and modification, leading to remodel the translational program of differentiating cells in favor of neural crest specification. Involved in nucleologenesis, possibly by playing a role in the maintenance of the fundamental structure of the fibrillar center and dense fibrillar component in the nucleolus. It has intrinsic GTPase and ATPase activities. This is Nucleolar and coiled-body phosphoprotein 1 from Mus musculus (Mouse).